Here is a 641-residue protein sequence, read N- to C-terminus: Epithelial sodium channel subunit beta (641 aa).

The Cytoplasmic segment spans residues 1–50 (MHLKKYLLKGLHRLQKGPGYSYKELLVWYCNNTNTHGPKRIICEGPKKKA). The helical transmembrane segment at 51–71 (MWFLITLLFTSLVCWQWGVFI) threads the bilayer. The Extracellular segment spans residues 72–533 (RTYLSWEVSV…GGQFGFWMGG (462 aa)). Disulfide bonds link Cys98/Cys273, Cys185/Cys190, Cys197/Cys204, Cys250/Cys257, Cys362/Cys449, Cys387/Cys445, Cys391/Cys441, Cys400/Cys427, and Cys402/Cys416. A glycan (N-linked (GlcNAc...) asparagine) is linked at Asn141. Asn261 carries N-linked (GlcNAc...) asparagine glycosylation. The helical transmembrane segment at 534–554 (SVLCLIEFGEILIDFVWITII) threads the bilayer. Residues 555–641 (KLVAFAKSLR…IESDSEGDAI (87 aa)) lie on the Cytoplasmic side of the membrane. The segment at 593–624 (PDVARPGPDPGTYPDEQTLPIPGTPPPNYDSL) is disordered. The short motif at 617-621 (PPPNY) is the PY motif; recruits WW domain-containing proteins and is thereby required for ubiquitination and inhibition of the channel by NEDD4 and NEDD4L element. Ser634 and Ser636 each carry phosphoserine.

The protein belongs to the amiloride-sensitive sodium channel (TC 1.A.6) family. SCNN1B subfamily. In terms of assembly, component of the heterotrimeric epithelial sodium channel (ENaC) composed of an alpha/SCNN1A, a beta/SCNN1B and a gamma/SCNN1G subunit. An additional delta/SCNN1D subunit can replace the alpha/SCNN1A subunit to form an alternative channel with specific properties. Interacts with WWP1 (via WW domains). Interacts with WWP2 (via WW domains); inhibits the channel. Interacts with the full-length immature form of PCSK9 (pro-PCSK9). Interacts (N-glycosylated) with BPIFA1; the interaction is direct and inhibits the proteolytic processing of SCNN1A and SCNN1G and the activation of ENaC. In terms of processing, ubiquitinated. Can be ubiquitinated at multiple sites and undergo monoubiquitination and polyubiquitination. Ubiquitination by NEDD4 or NEDD4L inhibits the ENaC channel through endocytosis, intracellular retention and degradation of its individual subunits. However, some studies could not confirm the ubiquitination of this subunit of the ENaC. Phosphorylated on serine and threonine residues. Aldosterone and insulin increase the basal level of phosphorylation. Post-translationally, N-glycosylated. N-glycosylation is required for interaction with BPIFA1.

Its subcellular location is the apical cell membrane. The protein localises to the cytoplasmic vesicle membrane. The enzyme catalyses Na(+)(in) = Na(+)(out). With respect to regulation, originally identified and characterized by its inhibition by the diuretic drug amiloride. Its function is as follows. This is one of the three pore-forming subunits of the heterotrimeric epithelial sodium channel (ENaC), a critical regulator of sodium balance and fluid homeostasis. ENaC operates in epithelial tissues, where it mediates the electrodiffusion of sodium ions from extracellular fluid through the apical membrane of cells, with water following osmotically. It plays a key role in maintaining sodium homeostasis through electrogenic sodium reabsorption in the kidneys. Additionally, ENaC is essential for airway surface liquid homeostasis, which is crucial for proper mucus clearance. The polypeptide is Epithelial sodium channel subunit beta (Canis lupus familiaris (Dog)).